The sequence spans 382 residues: Histidinol-phosphate aminotransferase (382 aa).

The interval 1–28 is disordered; it reads MTSAPRPRPTLDDLPLREDLRGKSPYGA. Residues 9–22 show a composition bias toward basic and acidic residues; it reads PTLDDLPLREDLRG. K233 is modified (N6-(pyridoxal phosphate)lysine).

It belongs to the class-II pyridoxal-phosphate-dependent aminotransferase family. Histidinol-phosphate aminotransferase subfamily. As to quaternary structure, homodimer. Pyridoxal 5'-phosphate serves as cofactor.

It carries out the reaction L-histidinol phosphate + 2-oxoglutarate = 3-(imidazol-4-yl)-2-oxopropyl phosphate + L-glutamate. The protein operates within amino-acid biosynthesis; L-histidine biosynthesis; L-histidine from 5-phospho-alpha-D-ribose 1-diphosphate: step 7/9. The protein is Histidinol-phosphate aminotransferase of Mycobacterium marinum (strain ATCC BAA-535 / M).